Reading from the N-terminus, the 643-residue chain is MNANPKFLSADAHVDAAAVAPLPNSRKVYVTGSQPDIRVPMREITQADTPTGFGGEKNPPIYVYDTSGPYTDPEAKIDIRAGLAALRQGWIDARGDTEVLGGLSSEYGLERAADPATADLRFPGLHRNPRRAQAGKNVSQMHYARQGIITPEMEYIAIRENQRRAEYLESLKASGPNGAKLAAMMGRQHPGQAFGAAAFGANAPAEITPEFVRSEVACGRAIIPANINHPESEPMIIGRNFLVKINANIGNSAVTSSIGEEVDKMTWAIRWGGDTVMDLSTGKHIHETREWIIRNSPVPIGTVPIYQALEKVNGKAEDLTWEIFRDTLIEQAEQGVDYFTIHAGVRLQYVPLTANRMTGIVSRGGSIMAKWCLAHHKESFLYEHFEEICEIMKAYDVSFSLGDGLRPGSIYDANDEAQLGELKTLGELTQIAWKHDVQVMIEGPGHVPMQLIKENMDLQLDWCKEAPFYTLGPLTTDIAPGYDHITSGIGAAMIGWFGTAMLCYVTPKEHLGLPNKDDVKEGIITYKLAAHAADLAKGHPGAQVRDNALSKARFEFRWEDQFNIGLDPDKAREFHDETLPKDSAKVAHFCSMCGPHFCSMKITQDVREFAAQQGVSETEALKKGMEVKAVEFVKTGAEIYHRQ.

Residues Asn248, Met277, Tyr306, His342, 362-364 (SRG), 403-406 (DGLR), and Glu442 contribute to the substrate site. A Zn(2+)-binding site is contributed by His446. Tyr469 is a binding site for substrate. His510 contacts Zn(2+). Cys590, Cys593, and Cys598 together coordinate [4Fe-4S] cluster.

This sequence belongs to the ThiC family. In terms of assembly, homodimer. [4Fe-4S] cluster serves as cofactor.

The enzyme catalyses 5-amino-1-(5-phospho-beta-D-ribosyl)imidazole + S-adenosyl-L-methionine = 4-amino-2-methyl-5-(phosphooxymethyl)pyrimidine + CO + 5'-deoxyadenosine + formate + L-methionine + 3 H(+). Its pathway is cofactor biosynthesis; thiamine diphosphate biosynthesis. Catalyzes the synthesis of the hydroxymethylpyrimidine phosphate (HMP-P) moiety of thiamine from aminoimidazole ribotide (AIR) in a radical S-adenosyl-L-methionine (SAM)-dependent reaction. The polypeptide is Phosphomethylpyrimidine synthase (Burkholderia lata (strain ATCC 17760 / DSM 23089 / LMG 22485 / NCIMB 9086 / R18194 / 383)).